Reading from the N-terminus, the 764-residue chain is Phenylalanine--tRNA ligase beta subunit (764 aa).

One can recognise a tRNA-binding domain in the interval 38 to 148 (CIAPKNVVVG…GELVLGKELH (111 aa)). A B5 domain is found at 375–455 (LKDCALTFQL…RFVGIDNLVS (81 aa)). Mg(2+) is bound by residues Asp433, Asp439, Glu442, and Glu443. Residues 673-763 (SIYPSSVRDL…LEKEFNARLK (91 aa)) enclose the FDX-ACB domain.

Belongs to the phenylalanyl-tRNA synthetase beta subunit family. Type 1 subfamily. As to quaternary structure, tetramer of two alpha and two beta subunits. The cofactor is Mg(2+).

The protein resides in the cytoplasm. The enzyme catalyses tRNA(Phe) + L-phenylalanine + ATP = L-phenylalanyl-tRNA(Phe) + AMP + diphosphate + H(+). This chain is Phenylalanine--tRNA ligase beta subunit (pheT), found in Helicobacter pylori (strain J99 / ATCC 700824) (Campylobacter pylori J99).